The chain runs to 127 residues: Small ribosomal subunit protein uS11 (127 aa).

This sequence belongs to the universal ribosomal protein uS11 family. Part of the 30S ribosomal subunit.

Located on the platform of the 30S subunit. The protein is Small ribosomal subunit protein uS11 of Natronomonas pharaonis (strain ATCC 35678 / DSM 2160 / CIP 103997 / JCM 8858 / NBRC 14720 / NCIMB 2260 / Gabara) (Halobacterium pharaonis).